A 440-amino-acid chain; its full sequence is Probable secretory pathway GDP dissociation inhibitor 1 (440 aa).

Belongs to the Rab GDI family.

This chain is Probable secretory pathway GDP dissociation inhibitor 1 (gdi1), found in Schizosaccharomyces pombe (strain 972 / ATCC 24843) (Fission yeast).